The primary structure comprises 240 residues: Protein unc-119 homolog A (240 aa).

The span at 1–11 (MKVKKGGGGAG) shows a compositional bias: gly residues. Residues 1–59 (MKVKKGGGGAGTATESAPGPSGQSVAPIPQPPAESESGSESEPDAGPGPRPGPLQRKQP) form a required for midbody localization region. A disordered region spans residues 1 to 61 (MKVKKGGGGA…GPLQRKQPIG (61 aa)). 3 positions are modified to phosphoserine; by CK2: Ser-37, Ser-39, and Ser-41. Residues 121–240 (LDPNAGRFVR…KADYSYSGTP (120 aa)) are required for centrosome localization. Tyr-131 is a tetradecanoate binding site.

The protein belongs to the PDE6D/unc-119 family. As to quaternary structure, interacts with CABP4; in the absence of calcium. Interacts with DNM1; leading to a decrease of DNM1 GTPase activity. May interact with GTP-bound ARL1. Interacts with ARL2 and ARL3 (GTP-bound forms); this promotes the release of myyristoylated cargo proteins. Found in a complex with ARL3, RP2 and UNC119; RP2 induces hydrolysis of GTP ARL3 in the complex, leading to the release of UNC119. Interacts with NPHP3 (when myristoylated). Interacts with CYS1 (when myristoylated). Interacts with MACIR; interaction only takes place when UNC119 is not liganded with myristoylated proteins. Interacts with LCK; this interaction plays a crucial role in activation of LCK. Interacts with FYN. Interacts with RAB11A; in a cell cycle-dependent manner. Interacts with LYN (via SH2 and SH3 domains); leading to LYN activation. Found in a complex with ABL1, ABL2, CRK and UNC119; leading to the inhibition of CRK phosphorylation by ABL kinases. Interacts with CD44; leading to Shigella invasion. Interacts with KLHL18 (via kelch repeats). Interacts with PPP3CA, PPP3CB and PPP3CC. Interacts with USP48; this interaction promotes UNC119 stability. Post-translationally, phosphorylation suppresses its interaction with KLHL18 and down-regulates its KLHL18-mediated degradation. Phosphorylated more under light conditions than dark conditions. Dephosphorylated by calcineurin. As to expression, abundantly expressed in retina, in photoreceptor synapses and inner segments. Expressed in a much lesser extent in several other tissues.

Its subcellular location is the cytoplasm. It localises to the cytoskeleton. The protein localises to the microtubule organizing center. It is found in the centrosome. The protein resides in the spindle pole. Its subcellular location is the spindle. Involved in synaptic functions in photoreceptor cells, the signal transduction in immune cells as a Src family kinase activator, endosome recycling, the uptake of bacteria and endocytosis, protein trafficking in sensory neurons and as lipid-binding chaperone with specificity for a diverse subset of myristoylated proteins. Specifically binds the myristoyl moiety of a subset of N-terminally myristoylated proteins and is required for their localization. Binds myristoylated GNAT1 and is required for G-protein localization and trafficking in sensory neurons. Probably plays a role in trafficking proteins in photoreceptor cells. Plays important roles in mediating Src family kinase signals for the completion of cytokinesis via RAB11A. This Homo sapiens (Human) protein is Protein unc-119 homolog A (UNC119).